We begin with the raw amino-acid sequence, 49 residues long: Large ribosomal subunit protein bL32c (49 aa).

The disordered stretch occupies residues 1 to 23 (MTPKKRKSKSKKNLRKTNWKKKA).

Belongs to the bacterial ribosomal protein bL32 family.

It is found in the plastid. The protein resides in the chloroplast. In Oltmannsiellopsis viridis (Marine flagellate), this protein is Large ribosomal subunit protein bL32c.